A 411-amino-acid polypeptide reads, in one-letter code: LL-diaminopimelate aminotransferase (411 aa).

The substrate site is built by tyrosine 15 and glycine 42. Residues tyrosine 72, 108-109, tyrosine 132, asparagine 187, tyrosine 218, and 246-248 each bind pyridoxal 5'-phosphate; these read SK and SFS. Substrate is bound by residues lysine 109, tyrosine 132, and asparagine 187. N6-(pyridoxal phosphate)lysine is present on lysine 249. Residues arginine 257 and asparagine 292 each coordinate pyridoxal 5'-phosphate. Substrate-binding residues include asparagine 292 and arginine 388.

Belongs to the class-I pyridoxal-phosphate-dependent aminotransferase family. LL-diaminopimelate aminotransferase subfamily. In terms of assembly, homodimer. The cofactor is pyridoxal 5'-phosphate.

It carries out the reaction (2S,6S)-2,6-diaminopimelate + 2-oxoglutarate = (S)-2,3,4,5-tetrahydrodipicolinate + L-glutamate + H2O + H(+). The protein operates within amino-acid biosynthesis; L-lysine biosynthesis via DAP pathway; LL-2,6-diaminopimelate from (S)-tetrahydrodipicolinate (aminotransferase route): step 1/1. In terms of biological role, involved in the synthesis of meso-diaminopimelate (m-DAP or DL-DAP), required for both lysine and peptidoglycan biosynthesis. Catalyzes the direct conversion of tetrahydrodipicolinate to LL-diaminopimelate. This Synechococcus sp. (strain JA-3-3Ab) (Cyanobacteria bacterium Yellowstone A-Prime) protein is LL-diaminopimelate aminotransferase.